Reading from the N-terminus, the 389-residue chain is Na(+)/H(+) antiporter NhaA (389 aa).

A run of 10 helical transmembrane segments spans residues 8–28, 48–68, 91–111, 119–139, 173–193, 214–234, 262–282, 288–308, 327–347, and 361–381; these read INFLQEFSIPLILGVLIALVW, ISLHFFVNDIFMVFFFAMAAI, MATLGGVLGPALVFLGLNALI, GWGIPTATDIALAWLVARVVF, NPVAPLWLLLTVAGMLVAYLL, AGLYLAHIHPALALVFIVPFL, WKIFVDFGLLLFGLTNAGVEF, LTWLVLIALVGGKTIGIFLMG, LLVAGVIAAMGLTVALFVSGV, and GALFSAVAAVIAFALGKVLGI.

Belongs to the NhaA Na(+)/H(+) (TC 2.A.33) antiporter family.

It localises to the cell membrane. It catalyses the reaction Na(+)(in) + 2 H(+)(out) = Na(+)(out) + 2 H(+)(in). Its function is as follows. Na(+)/H(+) antiporter that extrudes sodium in exchange for external protons. This chain is Na(+)/H(+) antiporter NhaA, found in Desulfitobacterium hafniense (strain DSM 10664 / DCB-2).